The primary structure comprises 244 residues: MSSFFLTGTDTNVGKTVASRAIIQALQNQGIQIVGYKPVAFSREECVYTDMENQQAAESDYDSQNNSDVLTLMKSTHEKVSYQEINSYTFRHSLPVFSVQGKHIRIEKMDADLARLNQKYQSVLVEGSYGWLTPINKTYCFADWAKSHQMPVVLVVGIKEGCLNHALLTVESIQQKGLPLLGWIANRINPCLGHYAEIIDLLSEKIDAPLLGQIPYLHKPEEQDLARYIHNLDRLTYMETVLAD.

Residue 12–17 (NVGKTV) coordinates ATP. Position 16 (Thr-16) interacts with Mg(2+). Lys-37 is a catalytic residue. Asp-68 is a binding site for ATP. Mg(2+) is bound by residues Asp-68 and Glu-126. Residues 186 to 187 (NR), 215 to 217 (PYL), and Glu-222 each bind ATP.

It belongs to the dethiobiotin synthetase family. In terms of assembly, homodimer. It depends on Mg(2+) as a cofactor.

The protein resides in the cytoplasm. It carries out the reaction (7R,8S)-7,8-diammoniononanoate + CO2 + ATP = (4R,5S)-dethiobiotin + ADP + phosphate + 3 H(+). Its pathway is cofactor biosynthesis; biotin biosynthesis; biotin from 7,8-diaminononanoate: step 1/2. In terms of biological role, catalyzes a mechanistically unusual reaction, the ATP-dependent insertion of CO2 between the N7 and N8 nitrogen atoms of 7,8-diaminopelargonic acid (DAPA, also called 7,8-diammoniononanoate) to form a ureido ring. This is ATP-dependent dethiobiotin synthetase BioD 1 from Pasteurella multocida (strain Pm70).